The sequence spans 558 residues: Dihydroxy-acid dehydratase (558 aa).

Cys54 serves as a coordination point for [2Fe-2S] cluster. Mg(2+) is bound at residue Asp86. Cys127 provides a ligand contact to [2Fe-2S] cluster. Mg(2+) contacts are provided by Asp128 and Lys129. An N6-carboxylysine modification is found at Lys129. Residue Cys199 participates in [2Fe-2S] cluster binding. Mg(2+) is bound at residue Glu448. The active-site Proton acceptor is Ser474.

This sequence belongs to the IlvD/Edd family. Homodimer. It depends on [2Fe-2S] cluster as a cofactor. The cofactor is Mg(2+).

It catalyses the reaction (2R)-2,3-dihydroxy-3-methylbutanoate = 3-methyl-2-oxobutanoate + H2O. It carries out the reaction (2R,3R)-2,3-dihydroxy-3-methylpentanoate = (S)-3-methyl-2-oxopentanoate + H2O. It functions in the pathway amino-acid biosynthesis; L-isoleucine biosynthesis; L-isoleucine from 2-oxobutanoate: step 3/4. Its pathway is amino-acid biosynthesis; L-valine biosynthesis; L-valine from pyruvate: step 3/4. In terms of biological role, functions in the biosynthesis of branched-chain amino acids. Catalyzes the dehydration of (2R,3R)-2,3-dihydroxy-3-methylpentanoate (2,3-dihydroxy-3-methylvalerate) into 2-oxo-3-methylpentanoate (2-oxo-3-methylvalerate) and of (2R)-2,3-dihydroxy-3-methylbutanoate (2,3-dihydroxyisovalerate) into 2-oxo-3-methylbutanoate (2-oxoisovalerate), the penultimate precursor to L-isoleucine and L-valine, respectively. The chain is Dihydroxy-acid dehydratase from Acidothermus cellulolyticus (strain ATCC 43068 / DSM 8971 / 11B).